Consider the following 110-residue polypeptide: Plasma membrane ATPase (110 aa).

Aspartate 72 and aspartate 76 together coordinate Mg(2+). A disordered region spans residues 88–110; sequence APESTSLNLPNDKELSEIAEQAK. A compositionally biased stretch (basic and acidic residues) spans 98-110; that stretch reads NDKELSEIAEQAK.

This sequence belongs to the cation transport ATPase (P-type) (TC 3.A.3) family. Type IIIA subfamily. In terms of processing, the N-terminus is blocked.

It localises to the cell membrane. The catalysed reaction is ATP + H2O + H(+)(in) = ADP + phosphate + 2 H(+)(out). The plasma membrane ATPase of plants and fungi is a hydrogen ion pump. The proton gradient it generates drives the active transport of nutrients by H(+)-symport. The resulting external acidification and/or internal alkinization may mediate growth responses. This Avena sativa (Oat) protein is Plasma membrane ATPase.